The chain runs to 56 residues: Male-specific sperm protein Mst87F (56 aa).

Belongs to the MST(3)CGP family. Testis.

This Drosophila melanogaster (Fruit fly) protein is Male-specific sperm protein Mst87F (Mst87F).